Consider the following 217-residue polypeptide: Methylthioribulose-1-phosphate dehydratase (217 aa).

The Zn(2+) site is built by His-106 and His-108.

Belongs to the aldolase class II family. MtnB subfamily. Zn(2+) serves as cofactor.

It carries out the reaction 5-(methylsulfanyl)-D-ribulose 1-phosphate = 5-methylsulfanyl-2,3-dioxopentyl phosphate + H2O. The protein operates within amino-acid biosynthesis; L-methionine biosynthesis via salvage pathway; L-methionine from S-methyl-5-thio-alpha-D-ribose 1-phosphate: step 2/6. In terms of biological role, catalyzes the dehydration of methylthioribulose-1-phosphate (MTRu-1-P) into 2,3-diketo-5-methylthiopentyl-1-phosphate (DK-MTP-1-P). The sequence is that of Methylthioribulose-1-phosphate dehydratase from Xanthomonas euvesicatoria pv. vesicatoria (strain 85-10) (Xanthomonas campestris pv. vesicatoria).